Reading from the N-terminus, the 196-residue chain is Nodulation protein A (196 aa).

It belongs to the NodA family.

It localises to the cytoplasm. Functionally, N-acyltransferase required for nodulation. Acts in the production of a small, heat-stable compound (Nod) that stimulates mitosis in various plant protoplasts. In Mesorhizobium sp. (strain 7653R), this protein is Nodulation protein A.